A 403-amino-acid polypeptide reads, in one-letter code: Zinc finger HIT domain-containing protein 2 (403 aa).

Position 1 is an N-acetylmethionine (methionine 1). Zn(2+) is bound by residues cysteine 7, cysteine 10, cysteine 22, cysteine 25, cysteine 30, cysteine 34, histidine 38, and cysteine 41. Residues 7–41 (CGFCPAGEVQPARYTCPRCNAPYCSLRCYRTHGTC) form an HIT-type zinc finger. The interval 72 to 98 (RQQRETEDEPGEAGLSSGPAPGGLSGL) is disordered. A Phosphothreonine modification is found at threonine 161.

In terms of assembly, interacts (via HIT-type zinc finger) with RUVBL2 in the presence of ATP or ADP; shows a stronger interaction in the presence of ADP. In terms of tissue distribution, low expression in most tissues; highly expressed in testis.

Its function is as follows. May act as a bridging factor mediating the interaction between the R2TP/Prefoldin-like (R2TP/PFDL) complex and U5 small nuclear ribonucleoprotein (U5 snRNP). Required for the interaction of R2TP complex subunit RPAP3 and prefoldin-like subunit URI1 with U5 snRNP proteins EFTUD2 and PRPF8. May play a role in regulating the composition of the U5 snRNP complex. The sequence is that of Zinc finger HIT domain-containing protein 2 (ZNHIT2) from Homo sapiens (Human).